Reading from the N-terminus, the 448-residue chain is Iroquois-class homeodomain protein irx-3 (448 aa).

The segment at residues 108–170 is a DNA-binding region (homeobox; TALE-type); the sequence is DPSRPKNATR…NARRRLKKEN (63 aa). The tract at residues 171-247 is disordered; the sequence is KMTWAPRSRT…EVSDGFEDLN (77 aa). A compositionally biased stretch (acidic residues) spans 195 to 222; it reads KHEDEEEIDLENIDTEDIESKEDLDDPD. Over residues 223–237 the composition is skewed to basic and acidic residues; that stretch reads TDIHSDSKTDTRSDS. Positions 238–247 are enriched in acidic residues; the sequence is EVSDGFEDLN.

The protein belongs to the TALE/IRO homeobox family. As to expression, primarily expressed in the developing central nervous system (CNS). At gastrula stage, expressed in both the superficial and deep layers of the presumptive neural plate with expression spreading to the prospective hindbrain, spinal cord and midbrain-hindbrain junction as neurulation proceeds. Not expressed in the anterior neural plate and CNS expression in the tadpole excludes the forebrain. Outside of the CNS, expressed around the closing blastopore at early gastrula stages and as gastrulation proceeds, expression switches to the anterior lateral plate mesoderm. In tadpoles, expressed in the ectodermal layer of the branchial arches, and in the otic vesicle. Also expressed in specific and overlapping dynamic patterns with irx1 and irx2 during pronephric kidney development. Renal expression begins before segment-specific terminal differentiation in the pronephric anlage at mid-neurula stage, and is later found in proximal tubule PT3 as well as intermediate tubule segments IT1 and IT2, with expression in the kidney being maintained through to the tadpole stage.

It is found in the nucleus. Functionally, acts partially redundantly with other irx members in neural patterning. Required for formation of the posterior forebrain, midbrain, hindbrain, and to a lesser extent, spinal cord. Both up-regulates and down-regulates gene expression during neural development. Acts early in neural plate development to induce proneural gene expression and specify a neural precursor state. Also up-regulates repressors that prevent neuronal differentiation. Required during at least two stages of pronephros kidney development; during neurula stages, maintains transcription of key renal genes to define the size and identity of the pronephric anlage, probably in part through regulation of bmp-signaling. Subsequently required for proper formation of the intermediate tubule segment of the pronephros. This Xenopus laevis (African clawed frog) protein is Iroquois-class homeodomain protein irx-3 (irx3).